The sequence spans 1434 residues: Protein patched homolog 1 (1434 aa).

Positions 1-13 (MASAGNAAGALGR) are enriched in low complexity. The segment at 1–34 (MASAGNAAGALGRQAGGGRRRRTGGPHRAAPDRD) is disordered. The Cytoplasmic segment spans residues 1 to 86 (MASAGNAAGA…GCYIQKNCGK (86 aa)). Residues 87-107 (FLVVGLLIFGAFAVGLKAANL) form a helical membrane-spanning segment. Residues 108-422 (ETNVEELWVE…LDDILKSFSD (315 aa)) lie on the Extracellular side of the membrane. N-linked (GlcNAc...) asparagine glycosylation is found at Asn127, Asn298, Asn335, and Asn400. The chain crosses the membrane as a helical span at residues 423–443 (VSVIRVASGYLLMLAYACLTM). Positions 424–584 (SVIRVASGYL…LLIFPAILSM (161 aa)) constitute an SSD domain. Residues 444–458 (LRWDCSKSQGAVGLA) lie on the Cytoplasmic side of the membrane. A helical membrane pass occupies residues 459 to 479 (GVLLVALSVAAGLGLCSLIGI). Residues 480 to 487 (SFNAATTQ) are Extracellular-facing. The helical transmembrane segment at 488 to 508 (VLPFLALGVGVDDVFLLAHAF) threads the bilayer. The Cytoplasmic portion of the chain corresponds to 509 to 533 (SETGQNKRIPFEDRTGECLKRTGAS). Residues 534–554 (VALTSISNVTAFFMAALIPIP) traverse the membrane as a helical segment. Topologically, residues 555–563 (ALRAFSLQA) are extracellular. A helical membrane pass occupies residues 564–584 (AVVVVFNFAMVLLIFPAILSM). Topologically, residues 585 to 734 (DLYRREDRRL…HYAPFLLKPK (150 aa)) are cytoplasmic. Residues 735–755 (AKVVVILLFLGLLGVSLYGTT) traverse the membrane as a helical segment. Residues 756–1013 (RVRDGLDLTD…WEQYISLRHW (258 aa)) lie on the Extracellular side of the membrane. N-linked (GlcNAc...) asparagine glycosylation is found at Asn861 and Asn986. Residues 1014–1034 (LLLSISVVLACTFLVCAVFLL) form a helical membrane-spanning segment. Topologically, residues 1035 to 1039 (NPWTA) are cytoplasmic. The chain crosses the membrane as a helical span at residues 1040–1060 (GIIVMVLALMTVELFGMMGLI). Residues 1061 to 1069 (GIKLSAVPV) are Extracellular-facing. Residues 1070 to 1090 (VILIASVGIGVEFTVHVALAF) traverse the membrane as a helical segment. Residues 1091–1107 (LTAIGDKNHRAMLALEH) lie on the Cytoplasmic side of the membrane. Residues 1108–1128 (MFAPVLDGAVSTLLGVLMLAG) form a helical membrane-spanning segment. At 1129–1140 (SEFDFIVRYFFA) the chain is on the extracellular side. A helical transmembrane segment spans residues 1141 to 1161 (VLAILTVLGVLNGLVLLPVLL). Topologically, residues 1162-1434 (SFFGPCPEVS…EERPWGSSSN (273 aa)) are cytoplasmic. Disordered regions lie at residues 1175–1219 (GLNR…TVSG), 1257–1348 (HPDS…SSVP), and 1368–1396 (HPPP…HGVF). Thr1181 carries the phosphothreonine modification. Ser1183 bears the Phosphoserine mark. Positions 1204–1213 (SDSSDSEYSS) are enriched in low complexity. Basic and acidic residues predominate over residues 1288–1297 (PRRDPPREGL). The span at 1335–1348 (PRNPTSTAMGSSVP) shows a compositional bias: polar residues. Lys1413 participates in a covalent cross-link: Glycyl lysine isopeptide (Lys-Gly) (interchain with G-Cter in ubiquitin).

This sequence belongs to the patched family. In terms of assembly, interacts with SNX17. Interacts with IHH. Interacts with G-protein coupled receptor GPR37L1. In terms of processing, glycosylation is necessary for SHH binding. In the absence of Hh ligands, ubiquitination by ITCH at Lys-1413 promotes endocytosis and both proteasomal and lysosomal degradation. As to expression, detected in cerebellar Bergmann glia cells (at protein level). In the developing embryo, first detected within the ventral neural tube and later in the somites and limb buds. Expression in the limb buds is restricted to the posterior ectoderm surrounding the zone of polarizing activity. In the adult, expression is seen in brain, lung, liver, kidney and ocular tissues; lower levels in heart, skeletal muscle, and testis.

It localises to the cell membrane. Its function is as follows. Acts as a receptor for sonic hedgehog (SHH), indian hedgehog (IHH) and desert hedgehog (DHH). Associates with the smoothened protein (SMO) to transduce the hedgehog's proteins signal. Seems to have a tumor suppressor function, as inactivation of this protein is probably a necessary, if not sufficient step for tumorigenesis. The protein is Protein patched homolog 1 (Ptch1) of Mus musculus (Mouse).